Consider the following 404-residue polypeptide: Homoserine O-succinyltransferase (404 aa).

Over residues 1–25 (MTDIQADPAVTAADAAQADTSSPTA) the composition is skewed to low complexity. The interval 1-30 (MTDIQADPAVTAADAAQADTSSPTAHQGKP) is disordered. The AB hydrolase-1 domain occupies 75-384 (NAVLICHALN…HGHDAFLLED (310 aa)). Ser-179 acts as the Nucleophile in catalysis. Arg-249 serves as a coordination point for substrate. Active-site residues include Asp-344 and His-377. Residue Asp-378 participates in substrate binding.

Belongs to the AB hydrolase superfamily. MetX family. In terms of assembly, homodimer.

It localises to the cytoplasm. The enzyme catalyses L-homoserine + succinyl-CoA = O-succinyl-L-homoserine + CoA. Its pathway is amino-acid biosynthesis; L-methionine biosynthesis via de novo pathway; O-succinyl-L-homoserine from L-homoserine: step 1/1. In terms of biological role, transfers a succinyl group from succinyl-CoA to L-homoserine, forming succinyl-L-homoserine. This Ralstonia pickettii (strain 12J) protein is Homoserine O-succinyltransferase.